A 359-amino-acid polypeptide reads, in one-letter code: 4-hydroxy-3-methylbut-2-en-1-yl diphosphate synthase (flavodoxin) (359 aa).

[4Fe-4S] cluster is bound by residues C264, C267, C299, and E306.

The protein belongs to the IspG family. [4Fe-4S] cluster serves as cofactor.

It catalyses the reaction (2E)-4-hydroxy-3-methylbut-2-enyl diphosphate + oxidized [flavodoxin] + H2O + 2 H(+) = 2-C-methyl-D-erythritol 2,4-cyclic diphosphate + reduced [flavodoxin]. Its pathway is isoprenoid biosynthesis; isopentenyl diphosphate biosynthesis via DXP pathway; isopentenyl diphosphate from 1-deoxy-D-xylulose 5-phosphate: step 5/6. Its function is as follows. Converts 2C-methyl-D-erythritol 2,4-cyclodiphosphate (ME-2,4cPP) into 1-hydroxy-2-methyl-2-(E)-butenyl 4-diphosphate. This is 4-hydroxy-3-methylbut-2-en-1-yl diphosphate synthase (flavodoxin) from Helicobacter pylori (strain HPAG1).